Reading from the N-terminus, the 98-residue chain is Small ribosomal subunit protein bS20 (98 aa).

Over residues 1-12 (MAPRKPSKKVGP) the composition is skewed to basic residues. Positions 1–31 (MAPRKPSKKVGPQKRPSAEKRVITSKKKQLR) are disordered.

It belongs to the bacterial ribosomal protein bS20 family.

Binds directly to 16S ribosomal RNA. The polypeptide is Small ribosomal subunit protein bS20 (Chlamydia trachomatis serovar A (strain ATCC VR-571B / DSM 19440 / HAR-13)).